Consider the following 370-residue polypeptide: MLGQVVTLILLLLLKVYQGKGCQGSADHVVSISGVPLQLQPNSIQTKVDSIAWKKLLPSQNGFHHILKWENGSLPSNTSNDRFSFIVKNLSLLIKAAQQQDSGLYCLEVTSISGKVQTATFQVFVFESLLPDKVEKPRLQGQGKILDRGRCQVALSCLVSRDGNVSYAWYRGSKLIQTAGNLTYLDEEVDINGTHTYTCNVSNPVSWESHTLNLTQDCQNAHQEFRFWPFLVIIVILSALFLGTLACFCVWRRKRKEKQSETSPKEFLTIYEDVKDLKTRRNHEQEQTFPGGGSTIYSMIQSQSSAPTSQEPAYTLYSLIQPSRKSGSRKRNHSPSFNSTIYEVIGKSQPKAQNPARLSRKELENFDVYS.

Residues 1–21 (MLGQVVTLILLLLLKVYQGKG) form the signal peptide. Ig-like domains lie at 22–127 (CQGS…FVFE) and 131–215 (PDKV…LNLT). Residues 22-229 (CQGSADHVVS…NAHQEFRFWP (208 aa)) are Extracellular-facing. 8 N-linked (GlcNAc...) asparagine glycosylation sites follow: Asn-71, Asn-77, Asn-89, Asn-164, Asn-181, Asn-192, Asn-200, and Asn-213. An intrachain disulfide couples Cys-157 to Cys-199. A helical membrane pass occupies residues 230-250 (FLVIIVILSALFLGTLACFCV). The Cytoplasmic portion of the chain corresponds to 251–370 (WRRKRKEKQS…KELENFDVYS (120 aa)). 4 short sequence motifs (ITSM) span residues 269–274 (TIYEDV), 295–300 (TIYSMI), 315–320 (TLYSLI), and 340–345 (TIYEVI). At Tyr-271 the chain carries Phosphotyrosine. At Tyr-297 the chain carries Phosphotyrosine; by FYN. Tyr-317 is subject to Phosphotyrosine. The interval 324–370 (RKSGSRKRNHSPSFNSTIYEVIGKSQPKAQNPARLSRKELENFDVYS) is disordered. Tyr-342 bears the Phosphotyrosine; by FYN mark.

As to quaternary structure, interacts with CD48. Interacts (via phosphorylated ITSM 1-4) with SH2D1A (via SH2 domain); SH2D1A probably mediates association with FYN. Interacts (via phosphorylated ITSM 3) with PTPN11/SHP-2, INPP5D/SHIP1, PTPN6/SHP-1 and CSK; binding of SH2D1A/SAP prevents association with PTPN11, PTPN6 and CSK; conflictingly a similar association has been described for phosphorylated ITSM 1 also including GRB2 and PLCG1. Interacts weakly (via phosphorylated ITSM 2) with PTPN11/SHP-2 and CSK. Interacts with SH2D1B. Interacts with PIK3R1; PI3K recruits SH2D1A. Interacts with MHC class I proteins; the interaction is proposed to prevent self-killing of NK cells. N-linked glycosylation is essential for the binding to its ligand CD48. Also O-glycosylated, in contrast, O-linked sialylation has a negative impact on ligand binding. In terms of processing, phosphorylated by FYN and CSK on tyrosine residues following activation. Coligation with inhibitory receptors such as KIR2DL1 inhibits phosphorylation upon contact of NK cells with sensitive target cells. As to expression, expressed in spleen, PBL, followed by lung, liver, testis and small intestine. Expressed in all natural killer (NK) cells, monocytes and basophils, TCR-gamma/delta+ T-cells, monocytes, basophils, and on a subset of CD8(+) T-cells.

It is found in the membrane. The protein resides in the cell membrane. The protein localises to the membrane raft. Functionally, heterophilic receptor of the signaling lymphocytic activation molecule (SLAM) family; its ligand is CD48. SLAM receptors triggered by homo- or heterotypic cell-cell interactions are modulating the activation and differentiation of a wide variety of immune cells and thus are involved in the regulation and interconnection of both innate and adaptive immune response. Activities are controlled by presence or absence of small cytoplasmic adapter proteins, SH2D1A/SAP and/or SH2D1B/EAT-2. Acts as activating natural killer (NK) cell receptor. Activating function implicates association with SH2D1A and FYN. Downstreaming signaling involves predominantly VAV1, and, to a lesser degree, INPP5D/SHIP1 and CBL. Signal attenuation in the absence of SH2D1A is proposed to be dependent on INPP5D and to a lesser extent PTPN6/SHP-1 and PTPN11/SHP-2. Stimulates NK cell cytotoxicity, production of IFN-gamma and granule exocytosis. Optimal expansion and activation of NK cells seems to be dependent on the engagement of CD244 with CD48 expressed on neighboring NK cells. Acts as costimulator in NK activation by enhancing signals by other NK receptors such as NCR3 and NCR1. At early stages of NK cell differentiation may function as an inhibitory receptor possibly ensuring the self-tolerance of developing NK cells. Involved in the regulation of CD8(+) T-cell proliferation; expression on activated T-cells and binding to CD48 provides costimulatory-like function for neighboring T-cells. Inhibits inflammatory responses in dendritic cells (DCs). This chain is Natural killer cell receptor 2B4 (CD244), found in Homo sapiens (Human).